The primary structure comprises 273 residues: Cyclic di-AMP synthase CdaA (273 aa).

3 helical membrane passes run 12-32 (LGNAVDILLVWYVIYKLIMVI), 40-60 (LLKGIVVIVLVRMASQYLGLS), and 61-81 (TLQWLMDQAITWGFLAIIIIF). Residues 82–242 (QPELRRALEQ…NGDLHRELTE (161 aa)) form the DAC domain.

It belongs to the adenylate cyclase family. DacA/CdaA subfamily. In terms of assembly, probably a homodimer. Interacts with CdaR. May interact with GlmM.

The protein resides in the cell membrane. The enzyme catalyses 2 ATP = 3',3'-c-di-AMP + 2 diphosphate. Its activity is regulated as follows. DAC activity is stimulated about 20-fold in E.coli by coexpression with CdaR. Its function is as follows. One of 3 paralogous diadenylate cyclases (DAC) in this bacteria, catalyzing the condensation of 2 ATP molecules into cyclic di-AMP (c-di-AMP). Upon expression in E.coli leads to c-di-AMP synthesis. Probably the main producer of c-di-AMP for the cell; is probably implicated in control of peptidoglycan synthesis. In B.subtilis c-di-AMP is a second messenger that mediates growth, DNA repair and cell wall homeostasis; it is toxic when present in excess. This chain is Cyclic di-AMP synthase CdaA, found in Bacillus subtilis (strain 168).